The following is a 199-amino-acid chain: Ribonuclease HII (199 aa).

The RNase H type-2 domain occupies 12–199; it reads DLLAGTDEAG…FGPVKKILEG (188 aa). A divalent metal cation-binding residues include Asp-18, Glu-19, and Asp-110.

It belongs to the RNase HII family. Requires Mn(2+) as cofactor. Mg(2+) serves as cofactor.

Its subcellular location is the cytoplasm. It catalyses the reaction Endonucleolytic cleavage to 5'-phosphomonoester.. Its function is as follows. Endonuclease that specifically degrades the RNA of RNA-DNA hybrids. The protein is Ribonuclease HII of Marinomonas sp. (strain MWYL1).